We begin with the raw amino-acid sequence, 83 residues long: Small ribosomal subunit protein uS17c (83 aa).

This sequence belongs to the universal ribosomal protein uS17 family. Part of the 30S ribosomal subunit.

The protein resides in the plastid. The protein localises to the chloroplast. One of the primary rRNA binding proteins, it binds specifically to the 5'-end of 16S ribosomal RNA. The protein is Small ribosomal subunit protein uS17c (rps17) of Pyropia yezoensis (Susabi-nori).